A 581-amino-acid chain; its full sequence is Arginine--tRNA ligase (581 aa).

The 'HIGH' region motif lies at 126 to 136; sequence PNLAKEMHVGH.

It belongs to the class-I aminoacyl-tRNA synthetase family. In terms of assembly, monomer.

Its subcellular location is the cytoplasm. It catalyses the reaction tRNA(Arg) + L-arginine + ATP = L-arginyl-tRNA(Arg) + AMP + diphosphate. This Shewanella putrefaciens (strain CN-32 / ATCC BAA-453) protein is Arginine--tRNA ligase.